The following is a 578-amino-acid chain: Trehalase (578 aa).

The first 19 residues, 1–19 (MPGSTWELHLLLLLGLGLG), serve as a signal peptide directing secretion. Residue Asn-78 is glycosylated (N-linked (GlcNAc...) asparagine). Substrate contacts are provided by residues Arg-168, 175–176 (WD), Asn-212, and 221–223 (RSQ). Asn-261 carries N-linked (GlcNAc...) asparagine glycosylation. Residues 286–288 (RPE) and Gly-319 contribute to the substrate site. The active-site Proton donor/acceptor is Asp-321. Asn-369 carries an N-linked (GlcNAc...) asparagine glycan. Glu-514 functions as the Proton donor/acceptor in the catalytic mechanism. Glu-528 is a binding site for substrate. Residue Ser-555 is the site of GPI-anchor amidated serine attachment. Residues 556–578 (GTQLALLEPHCLAAALLLSFLTR) constitute a propeptide, removed in mature form.

It belongs to the glycosyl hydrolase 37 family. Homodimer; disulfide-linked. Expressed in small intestine, kidney, and to a lesser extent in liver.

It is found in the cell membrane. It carries out the reaction alpha,alpha-trehalose + H2O = alpha-D-glucose + beta-D-glucose. Intestinal trehalase is probably involved in the hydrolysis of ingested trehalose. In Oryctolagus cuniculus (Rabbit), this protein is Trehalase (TREH).